The following is a 728-amino-acid chain: Ophiobolin F synthase oblA (728 aa).

The interval 1 to 322 is (7Z)-ophiobola-7,19-dien-3-ol synthase; sequence MEYKYSTIVD…RYHFPGRWNE (322 aa). D93 and D97 together coordinate Mg(2+). Position 93 (D93) interacts with substrate. The short motif at 93 to 97 is the DDXXD 1 element; it reads DDEID. Substrate-binding positions include 182-185, N226, 230-234, and 313-314; these read RCMD, SYEKE, and RY. The NSE/DTE motif lies at 226 to 234; that stretch reads NDLFSYEKE. Residues 323 to 728 form a geranylfarnesyl diphosphate synthase region; the sequence is LQKLRAEHGI…LRLMVDMLKV (406 aa). Residues 362–371 show a composition bias toward low complexity; that stretch reads GINGTNGVNG. The tract at residues 362 to 394 is disordered; sequence GINGTNGVNGKRNRDEDGDENDARINGNGFKKP. Residues K439, R442, and H471 each contribute to the isopentenyl diphosphate site. Mg(2+) is bound by residues D478 and D482. Positions 478–482 match the DDXXD 2 motif; it reads DDIED. R487 serves as a coordination point for dimethylallyl diphosphate. R488 contacts isopentenyl diphosphate. Dimethylallyl diphosphate is bound by residues K565, T566, Q604, N611, K621, and K631.

In the N-terminal section; belongs to the terpene synthase family. It in the C-terminal section; belongs to the FPP/GGPP synthase family. Requires Mg(2+) as cofactor.

The enzyme catalyses isopentenyl diphosphate + (2E,6E)-farnesyl diphosphate = (2E,6E,10E)-geranylgeranyl diphosphate + diphosphate. The catalysed reaction is isopentenyl diphosphate + (2E,6E,10E)-geranylgeranyl diphosphate = (2E,6E,10E,14E)-geranylfarnesyl diphosphate + diphosphate. It catalyses the reaction (2E,6E,10E,14E)-geranylfarnesyl diphosphate + H2O = ophiobolin F + diphosphate. It functions in the pathway secondary metabolite biosynthesis; terpenoid biosynthesis. Functionally, bifunctional sesterterpene synthase; part of the gene cluster that mediates the biosynthesis of the sesterterpenes ophiobolins, fungal phytotoxins with potential anti-cancer activities. The first step of the pathway is performed by the sesterterpene synthase oblA that possesses both prenyl transferase and terpene cyclase activity, converting isopentenyl diphosphate and dimethylallyl diphosphate into geranylfarnesyl diphosphate (GFPP) and further converting GFPP into ophiobolin F, respectively. Other sesterterpenoids (C(25) terpenoids) are found as minor products of oblA. The cytochrome P450 monooxygenase oblB then catalyzes a four-step oxidative transformation of ophiobolin F to yield ophiobolin C. The function of the cytochrome P450 monooxygenase oblE has still to be determined. The protein is Ophiobolin F synthase oblA of Emericella variicolor (Aspergillus stellatus).